We begin with the raw amino-acid sequence, 325 residues long: ATP-dependent 6-phosphofructokinase (325 aa).

An ATP-binding site is contributed by glycine 12. 22-26 (RTIVK) contributes to the ADP binding site. ATP-binding positions include 73 to 74 (RY) and 103 to 106 (GDGS). Position 104 (aspartate 104) interacts with Mg(2+). 126–128 (TID) is a substrate binding site. Residue aspartate 128 is the Proton acceptor of the active site. Arginine 155 contributes to the ADP binding site. 170–172 (MGH) contacts substrate. ADP is bound by residues 186-188 (GAE), lysine 213, and 215-217 (KRS). Residues glutamate 224, arginine 246, and 252–255 (HTQR) contribute to the substrate site.

This sequence belongs to the phosphofructokinase type A (PFKA) family. ATP-dependent PFK group I subfamily. Prokaryotic clade 'B1' sub-subfamily. Homotetramer. Mg(2+) serves as cofactor.

It is found in the cytoplasm. The enzyme catalyses beta-D-fructose 6-phosphate + ATP = beta-D-fructose 1,6-bisphosphate + ADP + H(+). The protein operates within carbohydrate degradation; glycolysis; D-glyceraldehyde 3-phosphate and glycerone phosphate from D-glucose: step 3/4. With respect to regulation, allosterically activated by ADP and other diphosphonucleosides, and allosterically inhibited by phosphoenolpyruvate. Functionally, catalyzes the phosphorylation of D-fructose 6-phosphate to fructose 1,6-bisphosphate by ATP, the first committing step of glycolysis. In Mycoplasma mobile (strain ATCC 43663 / 163K / NCTC 11711) (Mesomycoplasma mobile), this protein is ATP-dependent 6-phosphofructokinase.